Reading from the N-terminus, the 474-residue chain is tRNA-2-methylthio-N(6)-dimethylallyladenosine synthase (474 aa).

The region spanning 3-120 (QKLHIKTWGC…LPEMINQIRA (118 aa)) is the MTTase N-terminal domain. The [4Fe-4S] cluster site is built by Cys12, Cys49, Cys83, Cys157, Cys161, and Cys164. The 233-residue stretch at 143–375 (KAEGPTAFVS…QQRINNQAAQ (233 aa)) folds into the Radical SAM core domain. The TRAM domain maps to 378-441 (RAMLGTEQRV…TNSLRGDVVR (64 aa)).

Belongs to the methylthiotransferase family. MiaB subfamily. As to quaternary structure, monomer. [4Fe-4S] cluster is required as a cofactor.

The protein resides in the cytoplasm. It carries out the reaction N(6)-dimethylallyladenosine(37) in tRNA + (sulfur carrier)-SH + AH2 + 2 S-adenosyl-L-methionine = 2-methylsulfanyl-N(6)-dimethylallyladenosine(37) in tRNA + (sulfur carrier)-H + 5'-deoxyadenosine + L-methionine + A + S-adenosyl-L-homocysteine + 2 H(+). Catalyzes the methylthiolation of N6-(dimethylallyl)adenosine (i(6)A), leading to the formation of 2-methylthio-N6-(dimethylallyl)adenosine (ms(2)i(6)A) at position 37 in tRNAs that read codons beginning with uridine. The protein is tRNA-2-methylthio-N(6)-dimethylallyladenosine synthase of Mannheimia succiniciproducens (strain KCTC 0769BP / MBEL55E).